Here is a 1019-residue protein sequence, read N- to C-terminus: Alpha-mannosidase At3g26720 (1019 aa).

Residues 1–22 form the signal peptide; it reads MAVKCFSLYLILAAIVIGGVTS. Residues His-47 and Asp-49 each contribute to the Zn(2+) site. Asn-64 is a glycosylation site (N-linked (GlcNAc...) asparagine). A Zn(2+)-binding site is contributed by Asp-169. 2 N-linked (GlcNAc...) asparagine glycosylation sites follow: Asn-278 and Asn-336. Zn(2+) is bound at residue His-410. Residues Cys-466 and Cys-474 are joined by a disulfide bond. N-linked (GlcNAc...) asparagine glycans are attached at residues Asn-470, Asn-638, Asn-730, and Asn-820. A disulfide bridge links Cys-824 with Cys-829.

Belongs to the glycosyl hydrolase 38 family. In terms of assembly, homodimer. The cofactor is Zn(2+).

It carries out the reaction Hydrolysis of terminal, non-reducing alpha-D-mannose residues in alpha-D-mannosides.. In terms of biological role, liberates mannose from p-nitrophenyl-alpha-D-mannoside in vitro. The polypeptide is Alpha-mannosidase At3g26720 (Arabidopsis thaliana (Mouse-ear cress)).